The chain runs to 658 residues: Carnitine O-palmitoyltransferase 2, mitochondrial (658 aa).

A mitochondrion-targeting transit peptide spans 1 to 25 (MVPRLLLRAWPRGPAVGPGAPSRPL). At 26–178 (SAGSGPGQYL…GLLEPEVFHL (153 aa)) the chain is on the mitochondrial matrix side. N6-succinyllysine is present on K69. K79 carries the N6-acetyllysine modification. At K85 the chain carries N6-succinyllysine. Residues 179-208 (NPAKSDTITFKRLIRFVPSSLSWYGAYLVN) constitute an intramembrane region (note=Mitochondrial inner membrane). Residues 209 to 658 (AYPLDMSQYF…DALEGKSIKS (450 aa)) lie on the Mitochondrial matrix side of the membrane. The residue at position 239 (K239) is an N6-acetyllysine; alternate. K239 carries the N6-succinyllysine; alternate modification. Position 305 is an N6-acetyllysine (K305). H372 acts as the Proton acceptor in catalysis. 2 positions are modified to N6-succinyllysine: K424 and K439. 452–464 (GKEFLKKQKLSPD) is a binding site for CoA. (R)-carnitine-binding residues include Y486, S488, and T499. N6-acetyllysine; alternate occurs at positions 510 and 544. K510 and K544 each carry N6-succinyllysine; alternate.

The protein belongs to the carnitine/choline acetyltransferase family.

The protein resides in the mitochondrion inner membrane. The catalysed reaction is (R)-carnitine + hexadecanoyl-CoA = O-hexadecanoyl-(R)-carnitine + CoA. It carries out the reaction octanoyl-CoA + (R)-carnitine = O-octanoyl-(R)-carnitine + CoA. It catalyses the reaction decanoyl-CoA + (R)-carnitine = O-decanoyl-(R)-carnitine + CoA. The enzyme catalyses dodecanoyl-CoA + (R)-carnitine = O-dodecanoyl-R-carnitine + CoA. The catalysed reaction is tetradecanoyl-CoA + (R)-carnitine = O-tetradecanoyl-(R)-carnitine + CoA. It carries out the reaction (R)-carnitine + octadecanoyl-CoA = O-octadecanoyl-(R)-carnitine + CoA. It catalyses the reaction eicosanoyl-CoA + (R)-carnitine = O-eicosanoyl-(R)-carnitine + CoA. The enzyme catalyses (9Z)-tetradecenoyl-CoA + (R)-carnitine = O-(9Z)-tetradecenoyl-(R)-carnitine + CoA. The catalysed reaction is (5Z)-tetradecenoyl-CoA + (R)-carnitine = O-(5Z)-tetradecenoyl-(R)-carnitine + CoA. It carries out the reaction (R)-carnitine + (9Z)-octadecenoyl-CoA = O-(9Z)-octadecenoyl-(R)-carnitine + CoA. It catalyses the reaction 4,8-dimethylnonanoyl-CoA + (R)-carnitine = O-4,8-dimethylnonanoyl-(R)-carnitine + CoA. It participates in lipid metabolism; fatty acid beta-oxidation. Inhibited by trans-2-hexadecanoyl-CoA. Its function is as follows. Involved in the intramitochondrial synthesis of acylcarnitines from accumulated acyl-CoA metabolites. Reconverts acylcarnitines back into the respective acyl-CoA esters that can then undergo beta-oxidation, an essential step for the mitochondrial uptake of long-chain fatty acids and their subsequent beta-oxidation in the mitochondrion. Active with medium (C8-C12) and long-chain (C14-C18) acyl-CoA esters. In Homo sapiens (Human), this protein is Carnitine O-palmitoyltransferase 2, mitochondrial.